Consider the following 490-residue polypeptide: Bifunctional dihydrocamalexate synthase/camalexin synthase (490 aa).

Residues 1-21 (MSVFLCFLVLLPLILIFLNVL) form a helical membrane-spanning segment.

Belongs to the cytochrome P450 family.

The protein resides in the membrane. The enzyme catalyses 2-(L-cystein-S-yl)-2-(1H-indol-3-yl)-acetonitrile + 2 reduced [NADPH--hemoprotein reductase] + 2 O2 = camalexin + hydrogen cyanide + 2 oxidized [NADPH--hemoprotein reductase] + CO2 + 4 H2O + 2 H(+). The catalysed reaction is 2-(L-cystein-S-yl)-2-(1H-indol-3-yl)-acetonitrile + reduced [NADPH--hemoprotein reductase] + O2 = (R)-dihydrocamalexate + hydrogen cyanide + oxidized [NADPH--hemoprotein reductase] + 2 H2O + 2 H(+). It carries out the reaction (R)-dihydrocamalexate + reduced [NADPH--hemoprotein reductase] + O2 = camalexin + oxidized [NADPH--hemoprotein reductase] + CO2 + 2 H2O. Functionally, multifunctional enzyme involved in the biosynthesis of the indole-derived phytoalexin camalexin. Catalyzes two reactions, the formation of dihydrocamalexate from indole-3-acetonitrile-cysteine conjugate and the oxidative decarboxylation of dihydrocamalexate which is the final step in camalexin biosynthesis. Required for the resistance to the fungal pathogens A.brassicicola, B.cinerea, B.elliptica, B.tulipae, L.maculans and Colletotrichum higginsianum. Seems not to be required for resistance to P.syringae, P.porri, and not involved in age-related resistance. The chain is Bifunctional dihydrocamalexate synthase/camalexin synthase (CYP71B15) from Arabidopsis thaliana (Mouse-ear cress).